The sequence spans 188 residues: Phosphoribosylglycinamide formyltransferase (188 aa).

12 to 14 (GSN) serves as a coordination point for N(1)-(5-phospho-beta-D-ribosyl)glycinamide. (6R)-10-formyltetrahydrofolate contacts are provided by residues Lys66, 91-94 (MRLI), and Asn108. The active-site Proton donor is the His110.

The protein belongs to the GART family.

It catalyses the reaction N(1)-(5-phospho-beta-D-ribosyl)glycinamide + (6R)-10-formyltetrahydrofolate = N(2)-formyl-N(1)-(5-phospho-beta-D-ribosyl)glycinamide + (6S)-5,6,7,8-tetrahydrofolate + H(+). It participates in purine metabolism; IMP biosynthesis via de novo pathway; N(2)-formyl-N(1)-(5-phospho-D-ribosyl)glycinamide from N(1)-(5-phospho-D-ribosyl)glycinamide (10-formyl THF route): step 1/1. Catalyzes the transfer of a formyl group from 10-formyltetrahydrofolate to 5-phospho-ribosyl-glycinamide (GAR), producing 5-phospho-ribosyl-N-formylglycinamide (FGAR) and tetrahydrofolate. The protein is Phosphoribosylglycinamide formyltransferase of Staphylococcus aureus (strain Mu50 / ATCC 700699).